A 353-amino-acid chain; its full sequence is Ribosomal RNA large subunit methyltransferase M (353 aa).

Residues S183, 216 to 219, D235, D255, and D271 each bind S-adenosyl-L-methionine; that span reads APGG. The active-site Proton acceptor is K300.

It belongs to the class I-like SAM-binding methyltransferase superfamily. RNA methyltransferase RlmE family. RlmM subfamily. Monomer.

The protein localises to the cytoplasm. The enzyme catalyses cytidine(2498) in 23S rRNA + S-adenosyl-L-methionine = 2'-O-methylcytidine(2498) in 23S rRNA + S-adenosyl-L-homocysteine + H(+). Its function is as follows. Catalyzes the 2'-O-methylation at nucleotide C2498 in 23S rRNA. This is Ribosomal RNA large subunit methyltransferase M from Azotobacter vinelandii (strain DJ / ATCC BAA-1303).